We begin with the raw amino-acid sequence, 365 residues long: Serpentine receptor class epsilon-21 (365 aa).

7 consecutive transmembrane segments (helical) span residues 49 to 69, 82 to 102, 116 to 136, 158 to 178, 189 to 209, 250 to 270, and 292 to 314; these read ILIN…VFCI, IIIS…FVFI, LLFW…HTLL, VWIA…YAFL, IFIV…IIYF, VVVV…PIIL, and PLVV…LSYY.

The protein belongs to the nematode receptor-like protein sre family.

Its subcellular location is the membrane. The sequence is that of Serpentine receptor class epsilon-21 (sre-21) from Caenorhabditis elegans.